Reading from the N-terminus, the 687-residue chain is Protein Smaug homolog 2 (687 aa).

Over residues threonine 160–serine 172 the composition is skewed to basic and acidic residues. The disordered stretch occupies residues threonine 160 to methionine 301. A Phosphoserine modification is found at serine 172. 2 stretches are compositionally biased toward low complexity: residues tryptophan 175–tryptophan 190 and histidine 200–proline 211. The segment covering serine 215–leucine 224 has biased composition (polar residues). 4 positions are modified to phosphoserine: serine 271, serine 278, serine 279, and serine 281. Residues serine 278–serine 290 show a composition bias toward low complexity. The 74-residue stretch at serine 299–glutamate 372 folds into the SAM domain. Threonine 400 carries the phosphothreonine modification. A disordered region spans residues threonine 402–isoleucine 464. Residues glycine 424–proline 435 show a composition bias toward basic and acidic residues. The span at proline 448–aspartate 461 shows a compositional bias: low complexity. Residues serine 548, serine 550, serine 556, serine 585, and serine 593 each carry the phosphoserine modification. Arginine 595 carries the post-translational modification Asymmetric dimethylarginine. Positions serine 600–leucine 636 are disordered. Polar residues predominate over residues glycine 617–leucine 636. Serine 621 bears the Phosphoserine mark.

This sequence belongs to the SMAUG family.

The protein localises to the cytoplasm. Its subcellular location is the nucleus. In terms of biological role, has transcriptional repressor activity. Overexpression inhibits the transcriptional activities of AP-1, p53/TP53 and CDKN1A. The chain is Protein Smaug homolog 2 (Samd4b) from Mus musculus (Mouse).